Reading from the N-terminus, the 257-residue chain is 3-methyl-2-oxobutanoate hydroxymethyltransferase (257 aa).

D42 and D86 together coordinate Mg(2+). 3-methyl-2-oxobutanoate contacts are provided by residues 42–43 (DS), D86, and K116. E118 is a binding site for Mg(2+). E185 acts as the Proton acceptor in catalysis.

Belongs to the PanB family. Homodecamer; pentamer of dimers. Requires Mg(2+) as cofactor.

The protein resides in the cytoplasm. It catalyses the reaction 3-methyl-2-oxobutanoate + (6R)-5,10-methylene-5,6,7,8-tetrahydrofolate + H2O = 2-dehydropantoate + (6S)-5,6,7,8-tetrahydrofolate. The protein operates within cofactor biosynthesis; (R)-pantothenate biosynthesis; (R)-pantoate from 3-methyl-2-oxobutanoate: step 1/2. Functionally, catalyzes the reversible reaction in which hydroxymethyl group from 5,10-methylenetetrahydrofolate is transferred onto alpha-ketoisovalerate to form ketopantoate. The protein is 3-methyl-2-oxobutanoate hydroxymethyltransferase of Prochlorococcus marinus (strain MIT 9301).